Reading from the N-terminus, the 158-residue chain is Large ribosomal subunit protein uL16 (158 aa).

Positions 1-22 (MLSPKRTKYRKQQRGRMKGKAT) are disordered.

The protein belongs to the universal ribosomal protein uL16 family. As to quaternary structure, part of the 50S ribosomal subunit.

Functionally, binds 23S rRNA and is also seen to make contacts with the A and possibly P site tRNAs. In Synechococcus sp. (strain JA-3-3Ab) (Cyanobacteria bacterium Yellowstone A-Prime), this protein is Large ribosomal subunit protein uL16.